Reading from the N-terminus, the 255-residue chain is tRNA (guanine-N(1)-)-methyltransferase (255 aa).

S-adenosyl-L-methionine contacts are provided by residues Gly113 and 133 to 138 (IGDYVL).

This sequence belongs to the RNA methyltransferase TrmD family. Homodimer.

Its subcellular location is the cytoplasm. It carries out the reaction guanosine(37) in tRNA + S-adenosyl-L-methionine = N(1)-methylguanosine(37) in tRNA + S-adenosyl-L-homocysteine + H(+). In terms of biological role, specifically methylates guanosine-37 in various tRNAs. This chain is tRNA (guanine-N(1)-)-methyltransferase, found in Escherichia coli O127:H6 (strain E2348/69 / EPEC).